A 222-amino-acid polypeptide reads, in one-letter code: Probable transaldolase (222 aa).

Residue lysine 83 is the Schiff-base intermediate with substrate of the active site.

This sequence belongs to the transaldolase family. Type 3B subfamily.

It localises to the cytoplasm. It carries out the reaction D-sedoheptulose 7-phosphate + D-glyceraldehyde 3-phosphate = D-erythrose 4-phosphate + beta-D-fructose 6-phosphate. It functions in the pathway carbohydrate degradation; pentose phosphate pathway; D-glyceraldehyde 3-phosphate and beta-D-fructose 6-phosphate from D-ribose 5-phosphate and D-xylulose 5-phosphate (non-oxidative stage): step 2/3. Transaldolase is important for the balance of metabolites in the pentose-phosphate pathway. The chain is Probable transaldolase from Nitrosopumilus maritimus (strain SCM1).